Reading from the N-terminus, the 203-residue chain is Probable NADPH:quinone oxidoreductase 2 (203 aa).

This sequence belongs to the SsuE family. In terms of assembly, homotetramer. Requires FMN as cofactor.

The enzyme catalyses a quinone + NADH + H(+) = a quinol + NAD(+). The catalysed reaction is a quinone + NADPH + H(+) = a quinol + NADP(+). Its function is as follows. The enzyme apparently serves as a quinone reductase in connection with conjugation reactions of hydroquinones involved in detoxification pathways. The protein is Probable NADPH:quinone oxidoreductase 2 of Oryza sativa subsp. japonica (Rice).